The following is a 438-amino-acid chain: Serine hydroxymethyltransferase (438 aa).

Residue 133-135 participates in (6S)-5,6,7,8-tetrahydrofolate binding; sequence GHI. Position 239 is an N6-(pyridoxal phosphate)lysine (Lys239).

This sequence belongs to the SHMT family. In terms of assembly, homodimer. The cofactor is pyridoxal 5'-phosphate.

It is found in the cytoplasm. It carries out the reaction 5,10-methylenetetrahydromethanopterin + glycine + H2O = 5,6,7,8-tetrahydromethanopterin + L-serine. The protein operates within amino-acid biosynthesis; glycine biosynthesis; glycine from L-serine: step 1/1. Functionally, catalyzes the reversible interconversion of serine and glycine with tetrahydromethanopterin (H4MPT) serving as the one-carbon carrier. Also exhibits a pteridine-independent aldolase activity toward beta-hydroxyamino acids, producing glycine and aldehydes, via a retro-aldol mechanism. This Archaeoglobus fulgidus (strain ATCC 49558 / DSM 4304 / JCM 9628 / NBRC 100126 / VC-16) protein is Serine hydroxymethyltransferase.